The following is a 203-amino-acid chain: Holliday junction branch migration complex subunit RuvA (203 aa).

The domain I stretch occupies residues 1-63; the sequence is MIDYLRGTLT…EDVIRLYGFR (63 aa). The segment at 64-142 is domain II; the sequence is TKEKRSLFEK…ELHPGLFSQK (79 aa). The flexible linker stretch occupies residues 143–152; that stretch reads EEQPKPHEKN. Residues 153–203 form a domain III region; that stretch reads DGNQALDEAMEALKALGYVEKELKKVKPKLEQETLTTDAYIKKALQLMLNR.

It belongs to the RuvA family. In terms of assembly, homotetramer. Forms an RuvA(8)-RuvB(12)-Holliday junction (HJ) complex. HJ DNA is sandwiched between 2 RuvA tetramers; dsDNA enters through RuvA and exits via RuvB. An RuvB hexamer assembles on each DNA strand where it exits the tetramer. Each RuvB hexamer is contacted by two RuvA subunits (via domain III) on 2 adjacent RuvB subunits; this complex drives branch migration. In the full resolvosome a probable DNA-RuvA(4)-RuvB(12)-RuvC(2) complex forms which resolves the HJ.

It is found in the cytoplasm. Its function is as follows. The RuvA-RuvB-RuvC complex processes Holliday junction (HJ) DNA during genetic recombination and DNA repair, while the RuvA-RuvB complex plays an important role in the rescue of blocked DNA replication forks via replication fork reversal (RFR). RuvA specifically binds to HJ cruciform DNA, conferring on it an open structure. The RuvB hexamer acts as an ATP-dependent pump, pulling dsDNA into and through the RuvAB complex. HJ branch migration allows RuvC to scan DNA until it finds its consensus sequence, where it cleaves and resolves the cruciform DNA. This is Holliday junction branch migration complex subunit RuvA from Halalkalibacterium halodurans (strain ATCC BAA-125 / DSM 18197 / FERM 7344 / JCM 9153 / C-125) (Bacillus halodurans).